The primary structure comprises 1370 residues: DNA-directed RNA polymerase subunit beta (1370 aa).

The protein belongs to the RNA polymerase beta chain family. As to quaternary structure, the RNAP catalytic core consists of 2 alpha, 1 beta, 1 beta' and 1 omega subunit. When a sigma factor is associated with the core the holoenzyme is formed, which can initiate transcription.

The enzyme catalyses RNA(n) + a ribonucleoside 5'-triphosphate = RNA(n+1) + diphosphate. Its function is as follows. DNA-dependent RNA polymerase catalyzes the transcription of DNA into RNA using the four ribonucleoside triphosphates as substrates. This chain is DNA-directed RNA polymerase subunit beta, found in Bordetella bronchiseptica (strain ATCC BAA-588 / NCTC 13252 / RB50) (Alcaligenes bronchisepticus).